Reading from the N-terminus, the 187-residue chain is 5-formyltetrahydrofolate cyclo-ligase (187 aa).

Residues 6–10 (RQQIR), 139–146 (GMGGGFYD), and Asp178 contribute to the ATP site.

It belongs to the 5-formyltetrahydrofolate cyclo-ligase family.

It carries out the reaction (6S)-5-formyl-5,6,7,8-tetrahydrofolate + ATP = (6R)-5,10-methenyltetrahydrofolate + ADP + phosphate. Its pathway is one-carbon metabolism; tetrahydrofolate interconversion. Its function is as follows. Involved in the removal of 5-formyltetrahydrofolate. In vitro, it is a potent inhibitor of various folate-dependent enzymes in the C1 metabolism network and in vivo it might function as a folate storage. 5-formyltetrahydrofolate is also used as an antifolate rescue agent in cancer chemotherapy. Catalyzes the irreversible ATP-dependent transformation of 5-formyltetrahydrofolate (5-CHO-THF) to form 5,10-methenyltetrahydrofolate (5,10-CH=THF). The reverse reaction is catalyzed by the serine hydroxymethyltransferase GlyA (SHMT). The polypeptide is 5-formyltetrahydrofolate cyclo-ligase (Haemophilus influenzae (strain ATCC 51907 / DSM 11121 / KW20 / Rd)).